Consider the following 398-residue polypeptide: Phosphoglycerate kinase (398 aa).

Residues 23-25, Arg38, 61-64, Arg122, and Arg155 contribute to the substrate site; these read DFN and HLGK. ATP-binding positions include Lys206, Gly297, Glu328, and 354-357; that span reads GGDS.

Belongs to the phosphoglycerate kinase family. In terms of assembly, monomer.

Its subcellular location is the cytoplasm. It catalyses the reaction (2R)-3-phosphoglycerate + ATP = (2R)-3-phospho-glyceroyl phosphate + ADP. It functions in the pathway carbohydrate degradation; glycolysis; pyruvate from D-glyceraldehyde 3-phosphate: step 2/5. The protein is Phosphoglycerate kinase of Clostridium kluyveri (strain NBRC 12016).